The sequence spans 506 residues: UDP-glycosyltransferase eriJ (506 aa).

The protein belongs to the UDP-glycosyltransferase family.

It carries out the reaction 11-O-acetylcyathatriol + UDP-alpha-D-xylose = erinacine Q + UDP + H(+). The enzyme catalyses 11-O-acetylcyathatriol + UDP-alpha-D-glucose = erinacine Q2 + UDP + H(+). Its pathway is secondary metabolite biosynthesis. UDP-glycosyltransferase; part of the gene cluster that mediates the biosynthesis of erinacines, cyathane-xylosides that show unique biological activities, including leishmanicidal activity, stimulating activity for nerve growth-factor synthesis, and agonistic activity toward the kappa opioid receptor. Within the pathway, eriJ tranfers xylose from UDP-xylose onto C-14 of 11-O-acetyl-cyathatriol to form eracine Q, and, at a lower rate, glucose from UDP-D-glucose to produce eracine Q2. The first step of the erinacines biosynthesis pathway is catalyzed by the geranylgeranyl diphosphate (GGPP) synthase eriE via conversion of farnesyl pyrophosphate and isopentyl pyrophosphate into geranylgeranyl pyrophosphate (GGPP). GGPP is then substrate of the diterpene cyclase eriG for the production of cyatha-3,12-diene. The cytochrome P450 monooxygenase eriI then hydroxylates cyatha-3,12-diene at C-14 of the seven-membered ring to produce erinacol, which is further hydroxylated at C-15 by the cytochrome P450 monooxygenase eriC to yield cyathadiol. The cytochrome P450 monooxygenase eriA then catalyzes C-11 hydroxylation in the presence of the short chain dehydrogenase/reductase (SDR) eriH, which leads to the production of cyathatriol. The acetyltransferase eriL converts cyathatriol into 11-O-acetyl-cyathatriol. The SDR eriH catalyzes further oxidation of 11-O-acetyl-cyathatriol into 1-O-acetylcyathin A3. Finally, the glycosyl transferase eriJ tranfers xylose from UDP-xylose onto C-14 of 11-O-acetyl-cyathatriol to form eracine Q. EriJ is also able to convert 11-O-acetyl-cyathatriol to eracine Q2 by using UDP-D-glucose as cosubstrate, but at a lower rate. This is UDP-glycosyltransferase eriJ from Hericium erinaceus (Lion's mane mushroom).